The chain runs to 209 residues: Ribosomal RNA large subunit methyltransferase E (209 aa).

S-adenosyl-L-methionine contacts are provided by Gly-63, Trp-65, Asp-83, Asp-99, and Asp-124. The active-site Proton acceptor is Lys-164.

Belongs to the class I-like SAM-binding methyltransferase superfamily. RNA methyltransferase RlmE family.

The protein resides in the cytoplasm. It carries out the reaction uridine(2552) in 23S rRNA + S-adenosyl-L-methionine = 2'-O-methyluridine(2552) in 23S rRNA + S-adenosyl-L-homocysteine + H(+). Its function is as follows. Specifically methylates the uridine in position 2552 of 23S rRNA at the 2'-O position of the ribose in the fully assembled 50S ribosomal subunit. The chain is Ribosomal RNA large subunit methyltransferase E from Buchnera aphidicola subsp. Cinara cedri (strain Cc).